A 378-amino-acid polypeptide reads, in one-letter code: Acetylornithine deacetylase (378 aa).

H76 contacts Zn(2+). D78 is an active-site residue. A Zn(2+)-binding site is contributed by D108. Residue E140 is part of the active site. Zn(2+) is bound by residues E141, E165, and H351.

The protein belongs to the peptidase M20A family. ArgE subfamily. As to quaternary structure, homodimer. Zn(2+) is required as a cofactor. It depends on Co(2+) as a cofactor. Glutathione serves as cofactor.

Its subcellular location is the cytoplasm. The enzyme catalyses N(2)-acetyl-L-ornithine + H2O = L-ornithine + acetate. It functions in the pathway amino-acid biosynthesis; L-arginine biosynthesis; L-ornithine from N(2)-acetyl-L-ornithine (linear): step 1/1. Catalyzes the hydrolysis of the amide bond of N(2)-acetylated L-amino acids. Cleaves the acetyl group from N-acetyl-L-ornithine to form L-ornithine, an intermediate in L-arginine biosynthesis pathway, and a branchpoint in the synthesis of polyamines. The sequence is that of Acetylornithine deacetylase from Vibrio campbellii (strain ATCC BAA-1116).